Reading from the N-terminus, the 485-residue chain is Inosine-5'-monophosphate dehydrogenase (485 aa).

2 CBS domains span residues 97–154 (IIRD…VSDV) and 155–211 (MVRD…PDAS). NAD(+) contacts are provided by residues Asp246 and 295 to 297 (GIG). Residues Gly297 and Gly299 each coordinate K(+). Ser300 serves as a coordination point for IMP. A K(+)-binding site is contributed by Cys302. Residue Cys302 is the Thioimidate intermediate of the active site. IMP is bound by residues 335-337 (DGG), 358-359 (GS), and 382-386 (YRGMG). Arg398 functions as the Proton acceptor in the catalytic mechanism. Glu409 contributes to the IMP binding site. 3 residues coordinate K(+): Glu463, Ser464, and His465.

It belongs to the IMPDH/GMPR family. In terms of assembly, homotetramer. Requires K(+) as cofactor.

The enzyme catalyses IMP + NAD(+) + H2O = XMP + NADH + H(+). The protein operates within purine metabolism; XMP biosynthesis via de novo pathway; XMP from IMP: step 1/1. Mycophenolic acid (MPA) is a non-competitive inhibitor that prevents formation of the closed enzyme conformation by binding to the same site as the amobile flap. In contrast, mizoribine monophosphate (MZP) is a competitive inhibitor that induces the closed conformation. MPA is a potent inhibitor of mammalian IMPDHs but a poor inhibitor of the bacterial enzymes. MZP is a more potent inhibitor of bacterial IMPDH. Functionally, catalyzes the conversion of inosine 5'-phosphate (IMP) to xanthosine 5'-phosphate (XMP), the first committed and rate-limiting step in the de novo synthesis of guanine nucleotides, and therefore plays an important role in the regulation of cell growth. The chain is Inosine-5'-monophosphate dehydrogenase from Thermoplasma acidophilum (strain ATCC 25905 / DSM 1728 / JCM 9062 / NBRC 15155 / AMRC-C165).